Here is a 285-residue protein sequence, read N- to C-terminus: RNA 5'-monophosphate methyltransferase (285 aa).

Positions 1 to 28 (MAATQELSKGGVEEAVEEDDPAALKPGA) are disordered. S-adenosyl-L-methionine contacts are provided by residues Arg46, Asn77, Asp111, 136 to 137 (DI), and Met165. The Bin3-type SAM domain maps to 53 to 275 (ELLRQLFPPE…KHTEETQAIP (223 aa)).

This sequence belongs to the methyltransferase superfamily. Interacts with DICER1; the interaction may be mediated by RNA.

It is found in the cytoplasm. It catalyses the reaction a 5'-end 5'-phospho-ribonucleoside-RNA + S-adenosyl-L-methionine = a 5'-end (5'-methylphospho)-ribonucleoside-RNA + S-adenosyl-L-homocysteine. The catalysed reaction is a 5'-end 5'-phospho-ribonucleoside-RNA + 2 S-adenosyl-L-methionine = a 5'-end (5'-bismethylphospho)-ribonucleoside-RNA + 2 S-adenosyl-L-homocysteine. Its function is as follows. O-methyltransferase that specifically monomethylates 5'-monophosphate of cytoplasmic histidyl tRNA (tRNA(His)), acting as a capping enzyme by protecting tRNA(His) from cleavage by DICER1. Also able, with less efficiently, to methylate the 5' monophosphate of a subset of pre-miRNAs, acting as a negative regulator of miRNA processing. The 5' monophosphate of pre-miRNAs is recognized by DICER1 and is required for pre-miRNAs processing: methylation at this position reduces the processing of pre-miRNAs by DICER1. Was also reported to mediate dimethylation of pre-miR-145; however dimethylation cannot be reproduced by another group which observes a monomethylation of pre-miR-145. This Rattus norvegicus (Rat) protein is RNA 5'-monophosphate methyltransferase.